Consider the following 98-residue polypeptide: Protein Frey 1 (98 aa).

A helical transmembrane segment spans residues 13-29 (AGLSLFLHLILAVALLR). A disordered region spans residues 60–87 (YGILPKHPRPRGPRPLLSRAQQRKRDGP).

Interacts with SPPL2C (via active sites); the interaction stabilizes FREY1 protein and inhibits SPPL2C proteolytic activity. Interacts with IZUMO1; the interaction retains IZUMO1 at the endoplasmic reticulum membrane and coordinates IZUMO1 complex assembly.

The protein localises to the endoplasmic reticulum membrane. Key regulator for male fertility expressed transiently in round spermatids where it recruits IZUMO1 at the endoplasmic reticulum (ER) membrane and coordinates the oolemmal binding multimeric complex (IZUMO1 complex) assembly. Upon complete assembly of the IZUMO1 complex, its ER retention is released, facilitating IZUMO1 complex export to the acrosome. Through the interaction with SPPL2C, inhibits its intramembrane protease activity directly accessing the catalytic center of an I-CLiP. This chain is Protein Frey 1, found in Homo sapiens (Human).